A 199-amino-acid chain; its full sequence is Probable GTP-binding protein EngB (199 aa).

Residues 28–199 (DLPEIALAGR…ESWDTILEYL (172 aa)) form the EngB-type G domain. GTP-binding positions include 36-43 (GRSNVGKS), 63-67 (GKTQL), 81-84 (DVPG), 148-151 (TKAD), and 180-182 (FSS). S43 and T65 together coordinate Mg(2+).

Belongs to the TRAFAC class TrmE-Era-EngA-EngB-Septin-like GTPase superfamily. EngB GTPase family. Mg(2+) is required as a cofactor.

Its function is as follows. Necessary for normal cell division and for the maintenance of normal septation. The polypeptide is Probable GTP-binding protein EngB (Streptococcus equi subsp. equi (strain 4047)).